A 500-amino-acid chain; its full sequence is Protein SLENDER RICE1-LIKE 2 (500 aa).

Positions 68-454 (KELEKMALRS…QRLYSASAWR (387 aa)) constitute a GRAS domain. Residues 75 to 135 (LRSVNLMVTC…DALAERLFPA (61 aa)) form a leucine repeat I (LRI) region. A VHIID region spans residues 154–219 (FRGFYEAGPY…GGPPFLRITG (66 aa)). The short motif at 185–189 (VHVID) is the VHIID element. Residues 233–265 (DVGLRLAEFARSCSVPFAFRGIAADQLDGLRPW) form a leucine repeat II (LRII) region. The PFYRE stretch occupies residues 275–376 (VAINSVLQLH…EAYLQGEIAD (102 aa)). The LXXLL motif signature appears at 283–287 (LHRLL). Residues 379-454 (SREGSSRVER…QRLYSASAWR (76 aa)) are SAW. The tract at residues 466–500 (SGAADAMEESQNSNTNGGGGGSSGGGHGALNQIMQ) is disordered. Residues 481 to 493 (NGGGGGSSGGGHG) show a composition bias toward gly residues.

The protein belongs to the GRAS family. In terms of tissue distribution, expressed at low levels in leaf blades, leaf sheaths, rachis and flowers. Expressed in the embryo of immature seeds.

It localises to the nucleus. Its function is as follows. Probable transcriptional regulator that acts as a repressor of the gibberellin (GA) signaling pathway. Its repressive activity is weaker than that of SLR1. Its overexpression prevents the GA signaling pathway and induces a dwarf phenotype in Arabidopsis thaliana plants. In Oryza sativa subsp. japonica (Rice), this protein is Protein SLENDER RICE1-LIKE 2.